The sequence spans 175 residues: Pituitary adenylate cyclase-activating polypeptide (175 aa).

The first 24 residues, 1–24 (MTMCSGARLALLVYGIIMHSSVSC), serve as a signal peptide directing secretion. Residues 25-78 (SPAAGLSFPGIRPEDEAYDQDGNPLQDFYDWDPPGVGSPASALRDAYALYYPAD) constitute a propeptide that is removed on maturation. Positions 149 to 157 (VKKYLAAVL) are important for receptor binding. Leucine amide is present on L157. Lysine amide is present on K168. A propeptide spanning residues 172–175 (IAYL) is cleaved from the precursor.

Belongs to the glucagon family.

It is found in the secreted. In terms of biological role, PACAP is a neuropeptide involved in diverse array of physiological processes through activating the PACAP subfamily of class B1 G protein-coupled receptors: VIP receptor 1 (VIPR1), VIP receptor 2 (VIPR2), and PACAP type I receptor (ADCYAP1R1). Exerts neuroprotective and general cytoprotective effects due to anti-apoptotic, anti-inflammatory, and antioxidant actions. Promotes neuron projection development through the RAPGEF2/Rap1/B-Raf/ERK pathway. In chromaffin cells, induces long-lasting increase of intracellular calcium concentrations and neuroendocrine secretion. Involved in the control of glucose homeostasis, induces insulin secretion by pancreatic beta cells. PACAP exists in two bioactive forms from proteolysis of the same precursor protein, PACAP27 and PACAP38, which differ by eleven amino acid residues in the C-terminus. This chain is Pituitary adenylate cyclase-activating polypeptide, found in Mus musculus (Mouse).